A 28-amino-acid polypeptide reads, in one-letter code: ICPRILMPCSSDSDCLAECICLENGFCG.

3 disulfide bridges follow: Cys-2/Cys-19, Cys-9/Cys-21, and Cys-15/Cys-27.

It belongs to the protease inhibitor I7 (squash-type serine protease inhibitor) family.

The protein resides in the secreted. Inhibits trypsin. The polypeptide is Trypsin inhibitor 4 (Luffa aegyptiaca (Sponge gourd)).